Here is a 544-residue protein sequence, read N- to C-terminus: Chaperonin GroEL (544 aa).

ATP is bound by residues 30–33 (TLGP), Lys51, 87–91 (DGTTT), Gly415, 479–481 (NAA), and Asp495.

It belongs to the chaperonin (HSP60) family. Forms a cylinder of 14 subunits composed of two heptameric rings stacked back-to-back. Interacts with the co-chaperonin GroES.

It localises to the cytoplasm. It catalyses the reaction ATP + H2O + a folded polypeptide = ADP + phosphate + an unfolded polypeptide.. Functionally, together with its co-chaperonin GroES, plays an essential role in assisting protein folding. The GroEL-GroES system forms a nano-cage that allows encapsulation of the non-native substrate proteins and provides a physical environment optimized to promote and accelerate protein folding. This is Chaperonin GroEL from Francisella tularensis subsp. holarctica (strain FTNF002-00 / FTA).